Consider the following 550-residue polypeptide: CTP synthase (550 aa).

Residues 1–277 (MNGSADAGPR…GRAVERALGL (277 aa)) form an amidoligase domain region. Ser23 is a CTP binding site. A UTP-binding site is contributed by Ser23. 24–29 (SLGKGI) contacts ATP. Tyr64 contacts L-glutamine. Residue Asp81 coordinates ATP. Positions 81 and 151 each coordinate Mg(2+). CTP contacts are provided by residues 158–160 (DIE), 198–203 (KTKPTQ), and Lys234. UTP-binding positions include 198-203 (KTKPTQ) and Lys234. ATP is bound at residue Val252. A Glutamine amidotransferase type-1 domain is found at 302–549 (KIAIAGKYVK…VEAALAYQER (248 aa)). Gly364 is a binding site for L-glutamine. The Nucleophile; for glutamine hydrolysis role is filled by Cys391. Residues 392–395 (LGLQ), Glu415, and Arg472 each bind L-glutamine. Active-site residues include His522 and Glu524.

It belongs to the CTP synthase family. Homotetramer in the presence of UTP and ATP. Is in a protein concentration-dependent equilibrium between monomer, dimer, and tetramer in the absence of UTP and ATP.

It carries out the reaction UTP + L-glutamine + ATP + H2O = CTP + L-glutamate + ADP + phosphate + 2 H(+). The enzyme catalyses L-glutamine + H2O = L-glutamate + NH4(+). The catalysed reaction is UTP + NH4(+) + ATP = CTP + ADP + phosphate + 2 H(+). It functions in the pathway pyrimidine metabolism; CTP biosynthesis via de novo pathway; CTP from UDP: step 2/2. With respect to regulation, allosterically activated by GTP, when glutamine is the substrate. GTP has no effect on the reaction when ammonia is the substrate. The allosteric effector GTP functions by stabilizing the protein conformation that binds the tetrahedral intermediate(s) formed during glutamine hydrolysis. Inhibited by the product CTP, via allosteric rather than competitive inhibition. Catalyzes the ATP-dependent amination of UTP to CTP with either L-glutamine or ammonia as the source of nitrogen. Regulates intracellular CTP levels through interactions with the four ribonucleotide triphosphates. This is CTP synthase from Thermus thermophilus (strain ATCC 27634 / DSM 579 / HB8).